The primary structure comprises 259 residues: ATP synthase subunit a (259 aa).

5 helical membrane passes run 29–49 (TVNI…IWLF), 89–109 (LIAP…AMDL), 132–154 (SADV…FYSI), 209–229 (IFIL…NVPW), and 230–250 (AIFH…LTIV).

It belongs to the ATPase A chain family. In terms of assembly, F-type ATPases have 2 components, CF(1) - the catalytic core - and CF(0) - the membrane proton channel. CF(1) has five subunits: alpha(3), beta(3), gamma(1), delta(1), epsilon(1). CF(0) has three main subunits: a(1), b(2) and c(9-12). The alpha and beta chains form an alternating ring which encloses part of the gamma chain. CF(1) is attached to CF(0) by a central stalk formed by the gamma and epsilon chains, while a peripheral stalk is formed by the delta and b chains.

The protein resides in the cell inner membrane. Functionally, key component of the proton channel; it plays a direct role in the translocation of protons across the membrane. This chain is ATP synthase subunit a, found in Tolumonas auensis (strain DSM 9187 / NBRC 110442 / TA 4).